A 1235-amino-acid chain; its full sequence is DNA polymerase catalytic subunit (1235 aa).

2 disordered regions span residues 640–692 and 1098–1134; these read QGRF…TAGR and AAAP…ASKP. Over residues 650-661 the composition is skewed to basic and acidic residues; sequence APKRPAAAREDE. Acidic residues predominate over residues 662–675; it reads ERPEEEGEDEDERE. Residues 676-691 are compositionally biased toward basic and acidic residues; that stretch reads EGGGEREPEGARETAG.

This sequence belongs to the DNA polymerase type-B family. In terms of assembly, forms a complex with the ssDNA-binding protein UL29, the DNA polymerase processivity factor, and the alkaline exonuclease. Interacts with the putative helicase-primase complex subunit UL8; this interaction may coordinate leading and lagging strand DNA synthesis at the replication fork.

The protein localises to the host nucleus. The enzyme catalyses DNA(n) + a 2'-deoxyribonucleoside 5'-triphosphate = DNA(n+1) + diphosphate. It catalyses the reaction Endonucleolytic cleavage to 5'-phosphomonoester.. Functionally, replicates viral genomic DNA. The replication complex is composed of six viral proteins: the DNA polymerase, processivity factor, primase, primase-associated factor, helicase, and ssDNA-binding protein. Additionally, the polymerase contains an intrinsic ribonuclease H (RNase H) activity that specifically degrades RNA/DNA heteroduplexes or duplex DNA substrates in the 5' to 3' direction. Therefore, it can catalyze the excision of the RNA primers that initiate the synthesis of Okazaki fragments at a replication fork during viral DNA replication. The chain is DNA polymerase catalytic subunit from Homo sapiens (Human).